The following is a 337-amino-acid chain: uncharacterized protein (337 aa).

2 helical membrane-spanning segments follow: residues 241-261 (FTLLGFVLFFLSAVAGIGAFI) and 273-293 (ASLIISIWFLGGLQLMGIGII).

This sequence belongs to the glycosyltransferase 2 family.

Its subcellular location is the cell membrane. This is an uncharacterized protein from Bacillus subtilis (strain 168).